Consider the following 156-residue polypeptide: dCTP deaminase (156 aa).

DCTP contacts are provided by residues 79–84 (RSSLAR), Asp95, Gln124, and Tyr138.

This sequence belongs to the dCTP deaminase family. As to quaternary structure, homotrimer.

The catalysed reaction is dCTP + H2O + H(+) = dUTP + NH4(+). It participates in pyrimidine metabolism; dUMP biosynthesis; dUMP from dCTP (dUTP route): step 1/2. Functionally, catalyzes the deamination of dCTP to dUTP. The chain is dCTP deaminase from Pyrococcus furiosus (strain ATCC 43587 / DSM 3638 / JCM 8422 / Vc1).